The chain runs to 123 residues: Small ribosomal subunit protein uS12 (123 aa).

Aspartate 89 carries the post-translational modification 3-methylthioaspartic acid.

This sequence belongs to the universal ribosomal protein uS12 family. In terms of assembly, part of the 30S ribosomal subunit. Contacts proteins S8 and S17. May interact with IF1 in the 30S initiation complex.

With S4 and S5 plays an important role in translational accuracy. Functionally, interacts with and stabilizes bases of the 16S rRNA that are involved in tRNA selection in the A site and with the mRNA backbone. Located at the interface of the 30S and 50S subunits, it traverses the body of the 30S subunit contacting proteins on the other side and probably holding the rRNA structure together. The combined cluster of proteins S8, S12 and S17 appears to hold together the shoulder and platform of the 30S subunit. In Trichlorobacter lovleyi (strain ATCC BAA-1151 / DSM 17278 / SZ) (Geobacter lovleyi), this protein is Small ribosomal subunit protein uS12.